The sequence spans 309 residues: Probable MRF1 mitochondrial N(5)-glutamine methyltransferase mtq1 (309 aa).

Residues 124–128 (CTGSG), D148, and N200 each bind S-adenosyl-L-methionine. 200–203 (NPPY) serves as a coordination point for substrate.

The protein belongs to the protein N5-glutamine methyltransferase family.

It localises to the mitochondrion. It catalyses the reaction L-glutaminyl-[peptide chain release factor] + S-adenosyl-L-methionine = N(5)-methyl-L-glutaminyl-[peptide chain release factor] + S-adenosyl-L-homocysteine + H(+). In terms of biological role, methylates MRF1 on 'Gln-270' using S-adenosyl L-methionine as methyl donor. The chain is Probable MRF1 mitochondrial N(5)-glutamine methyltransferase mtq1 (mtq1) from Schizosaccharomyces pombe (strain 972 / ATCC 24843) (Fission yeast).